We begin with the raw amino-acid sequence, 146 residues long: Holo-[acyl-carrier-protein] synthase (146 aa).

Mg(2+)-binding residues include Asp9 and Glu63.

Belongs to the P-Pant transferase superfamily. AcpS family. It depends on Mg(2+) as a cofactor.

The protein resides in the cytoplasm. It catalyses the reaction apo-[ACP] + CoA = holo-[ACP] + adenosine 3',5'-bisphosphate + H(+). In terms of biological role, transfers the 4'-phosphopantetheine moiety from coenzyme A to a Ser of acyl-carrier-protein. The sequence is that of Holo-[acyl-carrier-protein] synthase from Burkholderia ambifaria (strain ATCC BAA-244 / DSM 16087 / CCUG 44356 / LMG 19182 / AMMD) (Burkholderia cepacia (strain AMMD)).